We begin with the raw amino-acid sequence, 632 residues long: Extracellular metalloproteinase 2 (632 aa).

Positions 1–19 (MHGLLLAGLAAALPLGVAG) are cleaved as a signal peptide. Residues 20 to 244 (LPARQQSGLS…VHNVVDYVAS (225 aa)) constitute a propeptide that is removed on maturation. The N-linked (GlcNAc...) asparagine glycan is linked to N270. Residue H429 coordinates Zn(2+). E430 is an active-site residue. H433 contacts Zn(2+).

This sequence belongs to the peptidase M36 family. The cofactor is Zn(2+).

The protein resides in the secreted. Functionally, secreted metalloproteinase probably acting as a virulence factor. The protein is Extracellular metalloproteinase 2 (MEP2) of Trichophyton tonsurans (Scalp ringworm fungus).